Here is a 485-residue protein sequence, read N- to C-terminus: MVEFEPRSYEDFDPEKRPSFGQALLPIAGMITFLAVGIVLLGLDAQMPLLWGIAFTGVIARYGWGYTWDELFDGISNSIVMGLGAIFILFIIYMLIASWVDAGTIPFIMYWGLEFLTPAVFVPLAALLSFVVATAIGSSWTTAGSLGIALVGIGSGLGIPAPLTAGAILSGVYMGDKQSPLSDTTLLASGVSDVDLWDHVRGMFPNTIIVGVISLALYAVLGLMAETGGTGGTGAEVAQIQGGLAGTYTLSVLVLLPLVITFGLAIKGYPALPSLGAGVFSAAGVSILIQGRGFAEAWQIIYSGTGPKTGVDLVNNLLSTGGLEGSIWVITIVFGALSIGGILEATGVLSVIAHNTAKAVDSVGGATLVTALGPLVINALTADQYMSIVIPGMTFRDLNDEYDLDGTSLSRTLEETGTVSEPMIPWNSGGVFMASALGVPVLSYLPYYFVGILSPILVVIMGFTGWKMYMKDPEESPEESADTAA.

The next 11 membrane-spanning stretches (helical) occupy residues 23-43 (ALLP…LLGL), 48-68 (PLLW…GYTW), 79-99 (IVMG…IASW), 116-136 (LTPA…ATAI), 148-168 (IALV…AGAI), 203-223 (MFPN…VLGL), 246-266 (GTYT…GLAI), 269-289 (YPAL…SILI), 323-343 (LEGS…GGIL), 362-382 (SVGG…ALTA), and 441-461 (VLSY…VVIM).

The protein belongs to the NhaC Na(+)/H(+) (TC 2.A.35) antiporter family.

It localises to the cell membrane. The catalysed reaction is L-ornithine(in) + L-arginine(out) = L-ornithine(out) + L-arginine(in). Functionally, uptake of arginine from the medium in exchange for ornithine. The protein is Arginine/ornithine antiporter ArcD (arcD) of Halobacterium salinarum (strain ATCC 700922 / JCM 11081 / NRC-1) (Halobacterium halobium).